The primary structure comprises 250 residues: 1-(5-phosphoribosyl)-5-[(5-phosphoribosylamino)methylideneamino] imidazole-4-carboxamide isomerase (250 aa).

D8 acts as the Proton acceptor in catalysis. The active-site Proton donor is the D131.

This sequence belongs to the HisA/HisF family.

Its subcellular location is the cytoplasm. The catalysed reaction is 1-(5-phospho-beta-D-ribosyl)-5-[(5-phospho-beta-D-ribosylamino)methylideneamino]imidazole-4-carboxamide = 5-[(5-phospho-1-deoxy-D-ribulos-1-ylimino)methylamino]-1-(5-phospho-beta-D-ribosyl)imidazole-4-carboxamide. Its pathway is amino-acid biosynthesis; L-histidine biosynthesis; L-histidine from 5-phospho-alpha-D-ribose 1-diphosphate: step 4/9. The chain is 1-(5-phosphoribosyl)-5-[(5-phosphoribosylamino)methylideneamino] imidazole-4-carboxamide isomerase from Paraburkholderia phytofirmans (strain DSM 17436 / LMG 22146 / PsJN) (Burkholderia phytofirmans).